Consider the following 116-residue polypeptide: Large ribosomal subunit protein uL18 (116 aa).

Belongs to the universal ribosomal protein uL18 family. In terms of assembly, part of the 50S ribosomal subunit; part of the 5S rRNA/L5/L18/L25 subcomplex. Contacts the 5S and 23S rRNAs.

In terms of biological role, this is one of the proteins that bind and probably mediate the attachment of the 5S RNA into the large ribosomal subunit, where it forms part of the central protuberance. The sequence is that of Large ribosomal subunit protein uL18 from Shewanella amazonensis (strain ATCC BAA-1098 / SB2B).